Consider the following 336-residue polypeptide: Aromatic prenyltransferase (336 aa).

The protein belongs to the aromatic prenyltransferase family.

Prenyltransferase that attaches isoprenoid moieties to carbon atoms of aromatic substrates in an enzyme-catalyzed Friedel-Crafts reaction. Shows specificity for dimethylallyl diphosphate (DMAPP) and does not accept geranyl diphosphate (GPP) or isopentenyl diphosphate (IPP). Prenylates the artificial substrate 2,7-dihydroxynaphthalene (2,7-DHN), as well as dihydrophenazine-1-carboxylic acid at a lower level. Only traces of products are detected with aspulvinone E, flaviolin, or 4-hydroxybenzoic acid as substrates; and no product is formed with L-tryptophan, L-tyrosine, or 4-hydroxyphenylpyruvate. Ptf seems no to be involved in the prenylation reaction in the biosynthesis of aspulvinone H and J and the physiological function of ptf remains unknown. This Aspergillus terreus (strain NIH 2624 / FGSC A1156) protein is Aromatic prenyltransferase.